We begin with the raw amino-acid sequence, 409 residues long: MNNEETEVKPWIVRIILIVGGLFGAHRLYLKQVPEAFVFFSTLGVLLIGWLYDSFMFKYEVNEYNQLINQSENNKEKEKWKNGKMQASQSKFVDFSFTRFLYSVLYGSYIGLATWLACTVTFGWTDINLIPFICVVALGITAGIYIIGQCGGQSRELSYIWMASFSSMFIMVRLAQTTVFRAIFLTAIVSTVIGNRSARLKKRRHTWKHFLFWSSLFLMLVCVILLGCSRKVADKQVTATRPGTFRETISVGSLIRDRIFDAKKVHSFFEGNPIIEYHSKSDIKNKNGEKTLKNSSFWYQVWSGELFDELTGAAHLTKIDWIELTTTFIVDVLRSEARVIDGSSTIEPFKWALWRNYLIHRFSLDPLISDDRLRTECKKWQTEEKSKKGNVDRDYNILAAKQGCSTFLL.

Residues 8-55 form the TM2 domain; sequence VKPWIVRIILIVGGLFGAHRLYLKQVPEAFVFFSTLGVLLIGWLYDSF. The next 6 membrane-spanning stretches (helical) occupy residues 10–30, 37–57, 104–124, 127–147, 168–190, and 209–229; these read PWIV…RLYL, FVFF…SFMF, VLYG…TFGW, INLI…IYII, MFIM…AIVS, and HFLF…LGCS.

It belongs to the TM2 family.

Its subcellular location is the membrane. The polypeptide is TM2 domain-containing protein ZK858.5 (Caenorhabditis elegans).